We begin with the raw amino-acid sequence, 161 residues long: Cyclic pyranopterin monophosphate synthase (161 aa).

Substrate-binding positions include 75 to 77 (LCH) and 113 to 114 (ME). The active site involves aspartate 128.

Belongs to the MoaC family. In terms of assembly, homohexamer; trimer of dimers.

It catalyses the reaction (8S)-3',8-cyclo-7,8-dihydroguanosine 5'-triphosphate = cyclic pyranopterin phosphate + diphosphate. It participates in cofactor biosynthesis; molybdopterin biosynthesis. Functionally, catalyzes the conversion of (8S)-3',8-cyclo-7,8-dihydroguanosine 5'-triphosphate to cyclic pyranopterin monophosphate (cPMP). In Enterobacter sp. (strain 638), this protein is Cyclic pyranopterin monophosphate synthase.